Consider the following 1090-residue polypeptide: UPF0507 protein SCRG_01893 (1090 aa).

One can recognise a VPS9 domain in the interval 289–436 (FSVNQLLTDF…FEDFNKNTGN (148 aa)).

This sequence belongs to the UPF0507 family.

The sequence is that of UPF0507 protein SCRG_01893 from Saccharomyces cerevisiae (strain RM11-1a) (Baker's yeast).